The sequence spans 429 residues: tRNA-2-methylthio-N(6)-dimethylallyladenosine synthase (429 aa).

The region spanning 2 to 115 is the MTTase N-terminal domain; that stretch reads KLLYLQTLGC…ISEAVKTPKF (114 aa). [4Fe-4S] cluster is bound by residues cysteine 11, cysteine 46, cysteine 78, cysteine 147, cysteine 151, and cysteine 154. Residues 133–365 enclose the Radical SAM core domain; sequence RGSPYKAFVN…QSRHNEILDE (233 aa). One can recognise a TRAM domain in the interval 368 to 429; that stretch reads KNQVGKIFDV…RMVLYGKITA (62 aa).

It belongs to the methylthiotransferase family. MiaB subfamily. As to quaternary structure, monomer. [4Fe-4S] cluster serves as cofactor.

It localises to the cytoplasm. The enzyme catalyses N(6)-dimethylallyladenosine(37) in tRNA + (sulfur carrier)-SH + AH2 + 2 S-adenosyl-L-methionine = 2-methylsulfanyl-N(6)-dimethylallyladenosine(37) in tRNA + (sulfur carrier)-H + 5'-deoxyadenosine + L-methionine + A + S-adenosyl-L-homocysteine + 2 H(+). In terms of biological role, catalyzes the methylthiolation of N6-(dimethylallyl)adenosine (i(6)A), leading to the formation of 2-methylthio-N6-(dimethylallyl)adenosine (ms(2)i(6)A) at position 37 in tRNAs that read codons beginning with uridine. This Campylobacter hominis (strain ATCC BAA-381 / DSM 21671 / CCUG 45161 / LMG 19568 / NCTC 13146 / CH001A) protein is tRNA-2-methylthio-N(6)-dimethylallyladenosine synthase.